A 441-amino-acid polypeptide reads, in one-letter code: MALPSNFLLGVCCFAWLCFLSSLSSQASTEESQSGASENVESEADPWSLLLPVDGTDRSGLLPPLFKVLSDRRGETPKLQPDSRALYYMKKLYKTYATKEGVPKPSRSHLYNTVRLFSPCAQQEQAPSNQVTGPLPMVDLLFNLDRVTAMEHLLKSVLLYTLNNSASSSSTVTCMCDLVVKEAMSSGRAPPRAPYSFTLKKHRWIEIDVTSLLQPLVTSSERSIHLSVNFTCTKDQVPEDGVFSMPLSVPPSLILYLNDTSTQAYHSWQSLQSTWRPLQHPGQAGVAARPVKEEAIEVERSPRRRRGQKAIRSEAKGPLLTASFNLSEYFKQFLFPQNECELHDFRLSFSQLKWDNWIVAPHRYNPRYCKGDCPRAVRHRYGSPVHTMVQNIIYEKLDPSVPRPSCVPGKYSPLSVLTIEPDGSIAYKEYEDMIATRCTCR.

A signal peptide spans 1-29 (MALPSNFLLGVCCFAWLCFLSSLSSQAST). The propeptide occupies 30–306 (EESQSGASEN…EVERSPRRRR (277 aa)). Residues Asn-163, Asn-229, Asn-258, and Asn-325 are each glycosylated (N-linked (GlcNAc...) asparagine). Disulfide bonds link Cys-340–Cys-406, Cys-369–Cys-438, and Cys-373–Cys-440.

The protein belongs to the TGF-beta family. Homodimer or heterodimer (Potential). But, in contrast to other members of this family, cannot be disulfide-linked. Post-translationally, phosphorylated; phosphorylation is critical for GDF9 function. Ovary. Strongly expressed in germinal vesicle (GV) stage oocytes, MII-stage oocytes and in zygotes.

Its subcellular location is the secreted. Its function is as follows. Required for ovarian folliculogenesis. The protein is Growth/differentiation factor 9 (Gdf9) of Mus musculus (Mouse).